Consider the following 127-residue polypeptide: Large ribosomal subunit protein eL24 (127 aa).

Positions 93 to 127 (KRAQKPEVKQAAAEQAKREIKEKKKAAAKKAAPKK) are disordered. Residues 115-127 (KKKAAAKKAAPKK) are compositionally biased toward basic residues.

It belongs to the eukaryotic ribosomal protein eL24 family.

The chain is Large ribosomal subunit protein eL24 (rpl24) from Dictyostelium discoideum (Social amoeba).